The chain runs to 75 residues: Putative UPF0377 protein YAL067W-A (75 aa).

The protein belongs to the UPF0377 family.

The sequence is that of Putative UPF0377 protein YAL067W-A from Saccharomyces cerevisiae (strain ATCC 204508 / S288c) (Baker's yeast).